The primary structure comprises 455 residues: Kynurenine--oxoglutarate transaminase 3 (455 aa).

Gly71 contacts substrate. N6-acetyllysine; alternate is present on Lys116. An N6-succinyllysine; alternate modification is found at Lys116. Asn218 lines the substrate pocket. N6-(pyridoxal phosphate)lysine is present on Lys280. Residue Arg430 coordinates substrate.

Belongs to the class-I pyridoxal-phosphate-dependent aminotransferase family. As to quaternary structure, homodimer. It depends on pyridoxal 5'-phosphate as a cofactor.

It catalyses the reaction L-kynurenine + 2-oxoglutarate = kynurenate + L-glutamate + H2O. The enzyme catalyses L-kynurenine + glyoxylate = kynurenate + glycine + H2O. The catalysed reaction is 3-hydroxy-L-kynurenine + glyoxylate = xanthurenate + glycine + H2O. It carries out the reaction an S-substituted L-cysteine + H2O = a thiol + pyruvate + NH4(+). The protein operates within amino-acid degradation; L-kynurenine degradation; kynurenate from L-kynurenine: step 1/2. Its function is as follows. Catalyzes the irreversible transamination of the L-tryptophan metabolite L-kynurenine to form kynurenic acid (KA), an intermediate in the tryptophan catabolic pathway which is also a broad spectrum antagonist of the three ionotropic excitatory amino acid receptors among others. May catalyze the beta-elimination of S-conjugates and Se-conjugates of L-(seleno)cysteine, resulting in the cleavage of the C-S or C-Se bond. Has transaminase activity towards L-kynurenine, tryptophan, phenylalanine, serine, cysteine, methionine, histidine, glutamine and asparagine with glyoxylate as an amino group acceptor (in vitro). Has lower activity with 2-oxoglutarate as amino group acceptor (in vitro). The chain is Kynurenine--oxoglutarate transaminase 3 from Bos taurus (Bovine).